A 361-amino-acid polypeptide reads, in one-letter code: POU domain, class 3, transcription factor 4 (361 aa).

Disordered regions lie at residues 99–131 (PHVA…GQPL) and 144–192 (MLEH…PTSD). Polar residues predominate over residues 122–131 (PSITSSGQPL). Basic and acidic residues predominate over residues 165 to 183 (VLREPPDHGELGSHHCQDH). In terms of domain architecture, POU-specific spans 186–260 (EETPTSDELE…LLNKWLEEAD (75 aa)). Ser265 carries the phosphoserine modification. The segment at residues 278-337 (KRKKRTSIEVSVKGVLETHFLKCPKPAAQEISSLADSLQLEKEVVRVWFCNRRQKEKRMT) is a DNA-binding region (homeobox).

Belongs to the POU transcription factor family. Class-3 subfamily. As to quaternary structure, interacts with HNRNPU. In terms of tissue distribution, brain specific.

The protein resides in the nucleus. Probable transcription factor which exert its primary action widely during early neural development and in a very limited set of neurons in the mature brain. This Homo sapiens (Human) protein is POU domain, class 3, transcription factor 4 (POU3F4).